The sequence spans 419 residues: Histidine--tRNA ligase (419 aa).

Belongs to the class-II aminoacyl-tRNA synthetase family. As to quaternary structure, homodimer.

The protein resides in the cytoplasm. It carries out the reaction tRNA(His) + L-histidine + ATP = L-histidyl-tRNA(His) + AMP + diphosphate + H(+). This Syntrophotalea carbinolica (strain DSM 2380 / NBRC 103641 / GraBd1) (Pelobacter carbinolicus) protein is Histidine--tRNA ligase.